Here is a 267-residue protein sequence, read N- to C-terminus: Palmitoyltransferase ZDHHC12 (267 aa).

Residues 1–9 (MALWPPLNS) lie on the Cytoplasmic side of the membrane. The helical transmembrane segment at 10–30 (GMLVRTGHTVLTWGITLVLFL) threads the bilayer. Residues 31-43 (HDTELRQWEEQGE) are Lumenal-facing. A helical transmembrane segment spans residues 44–64 (LLLPLTFLLLVLSSLLLYLAV). The Cytoplasmic portion of the chain corresponds to 65 to 140 (SLMDPGYVTT…ENCVGERNHP (76 aa)). In terms of domain architecture, DHHC spans 97–147 (RRCRHCLVLQPLRARHCRDCRRCVRRYDHHCPWMENCVGERNHPLFVAYLA). C127 serves as the catalytic S-palmitoyl cysteine intermediate. Residues 141–161 (LFVAYLALQLVVLLWGLCLAW) form a helical membrane-spanning segment. The Lumenal segment spans residues 162–178 (SGLQFFQPWGLWLRSTG). A helical transmembrane segment spans residues 179–199 (LLFTTFLLLSFFALVVALLLA). Over 200–267 (SHLYLVARNT…EEEEGSSQVV (68 aa)) the chain is Cytoplasmic.

The protein belongs to the DHHC palmitoyltransferase family.

The protein localises to the golgi apparatus membrane. It localises to the endoplasmic reticulum membrane. It carries out the reaction L-cysteinyl-[protein] + hexadecanoyl-CoA = S-hexadecanoyl-L-cysteinyl-[protein] + CoA. Functionally, palmitoyltransferase that catalyzes the addition of palmitate onto various protein substrates. Has a palmitoyltransferase activity toward gephyrin/GPHN, regulating its clustering at synapses and its function in gamma-aminobutyric acid receptor clustering. Thereby, indirectly regulates GABAergic synaptic transmission. Negatively regulates NLRP3-driven inflammation. Catalyzes NLRP3 palmitoylation, leading to its degradation via the chaperone-mediated autophagy (CMA) process. This Mus musculus (Mouse) protein is Palmitoyltransferase ZDHHC12.